The following is a 115-amino-acid chain: UPF0122 protein NT01CX_2214 (115 aa).

It belongs to the UPF0122 family.

Functionally, might take part in the signal recognition particle (SRP) pathway. This is inferred from the conservation of its genetic proximity to ftsY/ffh. May be a regulatory protein. This Clostridium novyi (strain NT) protein is UPF0122 protein NT01CX_2214.